A 962-amino-acid chain; its full sequence is Integrator complex subunit 7 (962 aa).

2 positions are modified to phosphoserine: serine 338 and serine 809.

The protein belongs to the Integrator subunit 7 family. Component of the Integrator complex, composed of core subunits INTS1, INTS2, INTS3, INTS4, INTS5, INTS6, INTS7, INTS8, INTS9/RC74, INTS10, INTS11/CPSF3L, INTS12, INTS13, INTS14 and INTS15. The core complex associates with protein phosphatase 2A subunits PPP2CA and PPP2R1A, to form the Integrator-PP2A (INTAC) complex. Interacts with NABP2.

The protein resides in the nucleus. It localises to the chromosome. Its subcellular location is the cytoplasm. Functionally, component of the integrator complex, a multiprotein complex that terminates RNA polymerase II (Pol II) transcription in the promoter-proximal region of genes. The integrator complex provides a quality checkpoint during transcription elongation by driving premature transcription termination of transcripts that are unfavorably configured for transcriptional elongation: the complex terminates transcription by (1) catalyzing dephosphorylation of the C-terminal domain (CTD) of Pol II subunit POLR2A/RPB1 and SUPT5H/SPT5, (2) degrading the exiting nascent RNA transcript via endonuclease activity and (3) promoting the release of Pol II from bound DNA. The integrator complex is also involved in terminating the synthesis of non-coding Pol II transcripts, such as enhancer RNAs (eRNAs), small nuclear RNAs (snRNAs), telomerase RNAs and long non-coding RNAs (lncRNAs). May be not involved in the recruitment of cytoplasmic dynein to the nuclear envelope by different components of the INT complex. Plays a role in DNA damage response (DDR) signaling during the S phase. This is Integrator complex subunit 7 (INTS7) from Bos taurus (Bovine).